Reading from the N-terminus, the 235-residue chain is 7-cyano-7-deazaguanine synthase (235 aa).

ATP is bound at residue 12 to 22 (FSGGQDSTACL). Residues C200, C215, C218, and C221 each contribute to the Zn(2+) site.

This sequence belongs to the QueC family. Requires Zn(2+) as cofactor.

The enzyme catalyses 7-carboxy-7-deazaguanine + NH4(+) + ATP = 7-cyano-7-deazaguanine + ADP + phosphate + H2O + H(+). The protein operates within purine metabolism; 7-cyano-7-deazaguanine biosynthesis. Its function is as follows. Catalyzes the ATP-dependent conversion of 7-carboxy-7-deazaguanine (CDG) to 7-cyano-7-deazaguanine (preQ(0)). This chain is 7-cyano-7-deazaguanine synthase, found in Methylibium petroleiphilum (strain ATCC BAA-1232 / LMG 22953 / PM1).